A 292-amino-acid chain; its full sequence is G1/S-specific cyclin-D3 (292 aa).

Residues 27–152 (VLQSLLRLEE…LVLGKLKWDL (126 aa)) enclose the Cyclin N-terminal domain. The tract at residues 254–292 (SLREASQTSSSPAPKAPRGSSSQGPSQTSTPTDVTAIHL) is disordered. Phosphoserine occurs at positions 264 and 279. A compositionally biased stretch (low complexity) spans 272–285 (GSSSQGPSQTSTPT). Position 283 is a phosphothreonine (T283).

Belongs to the cyclin family. Cyclin D subfamily. As to quaternary structure, interacts with the CDK4 and CDK6 protein kinases to form a serine/threonine kinase holoenzyme complex. The cyclin subunit imparts substrate specificity to the complex. Interacts with ATF5. Interacts with EIF3K. Component of the ternary complex cyclin D/CDK4/CDKN1B required for nuclear translocation and modulation of CDK4-mediated kinase activity. Can form similar complexes with either CDKN1A or CDKN2A. In terms of processing, phosphorylation at Thr-283 by MAP kinases is required for ubiquitination and degradation by the DCX(AMBRA1) complex. Ubiquitinated by the DCX(AMBRA1) complex during the transition from G1 to S cell phase, leading to its degradation: ubiquitination is dependent on Thr-283 phosphorylation. The DCX(AMBRA1) complex represents the major regulator of CCND3 stability during the G1/S transition. Polyubiquitinated by the SCF(FBXL2) complex, leading to proteasomal degradation.

The protein resides in the nucleus. It is found in the cytoplasm. In terms of biological role, regulatory component of the cyclin D3-CDK4 (DC) complex that phosphorylates and inhibits members of the retinoblastoma (RB) protein family including RB1 and regulates the cell-cycle during G(1)/S transition. Phosphorylation of RB1 allows dissociation of the transcription factor E2F from the RB/E2F complex and the subsequent transcription of E2F target genes which are responsible for the progression through the G(1) phase. Hypophosphorylates RB1 in early G(1) phase. Cyclin D-CDK4 complexes are major integrators of various mitogenenic and antimitogenic signals. Component of the ternary complex, cyclin D3/CDK4/CDKN1B, required for nuclear translocation and activity of the cyclin D-CDK4 complex. Shows transcriptional coactivator activity with ATF5 independently of CDK4. This is G1/S-specific cyclin-D3 from Homo sapiens (Human).